Reading from the N-terminus, the 336-residue chain is Glycerol-3-phosphate dehydrogenase [NAD(P)+] (336 aa).

Residues S14, W15, R35, R36, and K109 each coordinate NADPH. 2 residues coordinate sn-glycerol 3-phosphate: K109 and G139. A143 contributes to the NADPH binding site. K194, D247, S257, R258, and N259 together coordinate sn-glycerol 3-phosphate. The Proton acceptor role is filled by K194. R258 lines the NADPH pocket. E284 contacts NADPH.

It belongs to the NAD-dependent glycerol-3-phosphate dehydrogenase family.

It localises to the cytoplasm. The enzyme catalyses sn-glycerol 3-phosphate + NAD(+) = dihydroxyacetone phosphate + NADH + H(+). It catalyses the reaction sn-glycerol 3-phosphate + NADP(+) = dihydroxyacetone phosphate + NADPH + H(+). It participates in membrane lipid metabolism; glycerophospholipid metabolism. Catalyzes the reduction of the glycolytic intermediate dihydroxyacetone phosphate (DHAP) to sn-glycerol 3-phosphate (G3P), the key precursor for phospholipid synthesis. The polypeptide is Glycerol-3-phosphate dehydrogenase [NAD(P)+] (Streptomyces avermitilis (strain ATCC 31267 / DSM 46492 / JCM 5070 / NBRC 14893 / NCIMB 12804 / NRRL 8165 / MA-4680)).